Here is a 1938-residue protein sequence, read N- to C-terminus: Myosin-4 (1938 aa).

Residues 33 to 82 (DAKSSVFVADPKESFVKATVQSREGGKVTAKTEAGATVTVKEDQVFPMNP) enclose the Myosin N-terminal SH3-like domain. Ser36 is subject to Phosphoserine. A phosphothreonine mark is found at Thr64 and Thr69. The Myosin motor domain occupies 86–781 (DKIEDMAMMT…LLGLLEEMRD (696 aa)). Position 179–186 (179–186 (GESGAGKT)) interacts with ATP. Tyr389 is subject to Phosphotyrosine. Ser392 is modified (phosphoserine). Thr419 is modified (phosphothreonine). At Tyr424 the chain carries Phosphotyrosine. The interval 658–680 (LNKLMTNLRSTHPHFVRCIIPNE) is actin-binding. His756 is modified (pros-methylhistidine). Residues 760 to 774 (KFGHTKVFFKAGLLG) are actin-binding. The IQ domain maps to 784 to 813 (LAQLITRTQAMCRGFLARVEYKKMVERRES). Residues 845–1926 (SAETEKEMAN…ESQVNKLRVK (1082 aa)) are a coiled coil. Phosphoserine is present on residues Ser1091, Ser1095, Ser1161, and Ser1236. The residue at position 1240 (Thr1240) is a Phosphothreonine. The residue at position 1242 (Ser1242) is a Phosphoserine. Thr1254 is subject to Phosphothreonine. A Phosphoserine modification is found at Ser1260. A Phosphothreonine modification is found at Thr1264. A Phosphoserine modification is found at Ser1277. The residue at position 1285 (Thr1285) is a Phosphothreonine. Phosphoserine is present on residues Ser1287, Ser1291, Ser1302, and Ser1305. Position 1463 is a phosphotyrosine (Tyr1463). Thr1466 bears the Phosphothreonine mark. Ser1473 is subject to Phosphoserine. Tyr1491 carries the phosphotyrosine modification. Phosphoserine is present on Ser1494. The residue at position 1500 (Thr1500) is a Phosphothreonine. Phosphoserine is present on Ser1513. Position 1516 is a phosphothreonine (Thr1516). Phosphoserine is present on residues Ser1541, Ser1553, Ser1573, Ser1599, Ser1602, Ser1713, and Ser1725. Residues Thr1729 and Thr1735 each carry the phosphothreonine modification. Ser1738 is subject to Phosphoserine.

This sequence belongs to the TRAFAC class myosin-kinesin ATPase superfamily. Myosin family. In terms of assembly, muscle myosin is a hexameric protein that consists of 2 heavy chain subunits (MHC), 2 alkali light chain subunits (MLC) and 2 regulatory light chain subunits (MLC-2).

The protein resides in the cytoplasm. Its subcellular location is the myofibril. Muscle contraction. This Oryctolagus cuniculus (Rabbit) protein is Myosin-4 (MYH4).